A 207-amino-acid chain; its full sequence is Intraflagellar transport protein 43 homolog A (207 aa).

Residues 1–104 are disordered; the sequence is MDDNLQLGDS…GSDDEGDIPV (104 aa).

This sequence belongs to the IFT43 family. Component of IFT complex A.

Functionally, component of IFT complex A (IFT-A) involved in retrograde ciliary transport along microtubules from the ciliary tip to the base. This is Intraflagellar transport protein 43 homolog A (ift43a) from Salmo salar (Atlantic salmon).